The primary structure comprises 593 residues: Corrinoid activation enzyme RamQ (593 aa).

Residues 1 to 76 (MRVLFPLLEE…GMEIYASREQ (76 aa)) form the 2Fe-2S ferredoxin-type domain. 4 residues coordinate [2Fe-2S] cluster: Cys35, Cys41, Cys44, and Cys60.

The cofactor is [2Fe-2S] cluster.

Involved in the degradation of the quaternary amines L-proline betaine and L-carnitine. Component of a corrinoid-dependent methyltransferase system that transfers a methyl group from L-proline betaine or L-carnitine to tetrahydrofolate (THF), forming methyl-THF, a key intermediate in the Wood-Ljungdahl acetogenesis pathway. RamQ is not required for the methyl transfer, but it stimulates reduction of reconstituted MtqC from the Co(II) state to the Co(I) state in vitro. It also stimulates the rate of THF methylation. The polypeptide is Corrinoid activation enzyme RamQ (Eubacterium limosum).